The chain runs to 269 residues: 5'-nucleotidase SurE (269 aa).

A divalent metal cation contacts are provided by D11, D12, S43, and N101.

This sequence belongs to the SurE nucleotidase family. A divalent metal cation serves as cofactor.

It localises to the cytoplasm. The enzyme catalyses a ribonucleoside 5'-phosphate + H2O = a ribonucleoside + phosphate. Functionally, nucleotidase that shows phosphatase activity on nucleoside 5'-monophosphates. The sequence is that of 5'-nucleotidase SurE from Synechococcus sp. (strain WH7803).